The following is a 186-amino-acid chain: ADP-ribosylation factor-like protein 8A (186 aa).

Residues M1–E19 constitute an intramembrane region (note=Mediates targeting to membranes). Residues Q29–T35, D71–Q75, and N130–D133 each bind GTP.

The protein belongs to the small GTPase superfamily. Arf family.

The protein resides in the late endosome membrane. Its subcellular location is the lysosome membrane. Functionally, may play a role in lysosomes motility. Alternatively, may play a role in chromosome segregation. The chain is ADP-ribosylation factor-like protein 8A (arl8a) from Xenopus tropicalis (Western clawed frog).